Consider the following 1215-residue polypeptide: Protein benign gonial cell neoplasm (1215 aa).

Residues 407–439 form an ANK repeat; sequence TGKTAVHFASELNKANHLRLLLFMGADPYIVDL. T898 carries the phosphothreonine modification.

Part of a complex composed of at least mei-P26, bam, bgcn and Sxl; this complex is involved in translational repression of nanos mRNA. Interacts with bam (via C-terminus); the interaction is direct. Interacts with mei-P26; the interaction is direct and does not require bam. Weakly interacts with wh/wuho; this interaction may be required for the function or formation of the mei-P26-bgcn-bam-Sxl complex. Part of a complex composed of at least tut, bam and bgcn; complex formation does not require RNA. Interacts with tut; the interaction is indirect and is mediated by bam. As part of the bam-bgcn-tut complex associates with twin; may recruit the CCR4-NOT1 deadenylation complex to mRNA 3'UTRs to mediate post-transcriptional regulation of expression. In terms of tissue distribution, expressed in testis and in 5-8 germline stem cells of ovaries, immediately adjacent to terminal filament. Expressed in ovarian germline cells throughout the germarium (at protein level).

In terms of biological role, forms a complex with tut and bam involved in 3'UTR-dependent post-transcriptional repression of several 3'-RNA processing factors, which promotes germline stem cell lineage differentiation and mitosis-to-meiosis transition. Part of a complex with bam involved in 3'-UTR-dependent translational repression of a subset of mRNAs, including those for mei-P26, nanos and shg/E-cadherin; may act as a promiscuous RNA-binding protein tethering bam to its target mRNAs. Required for regulating the progression of gonialblast cells through transit amplification and differentiation into gametes. This chain is Protein benign gonial cell neoplasm, found in Drosophila melanogaster (Fruit fly).